We begin with the raw amino-acid sequence, 427 residues long: Glutamate-1-semialdehyde 2,1-aminomutase (427 aa).

The residue at position 265 (lysine 265) is an N6-(pyridoxal phosphate)lysine.

It belongs to the class-III pyridoxal-phosphate-dependent aminotransferase family. HemL subfamily. In terms of assembly, homodimer. Pyridoxal 5'-phosphate is required as a cofactor.

Its subcellular location is the cytoplasm. It carries out the reaction (S)-4-amino-5-oxopentanoate = 5-aminolevulinate. It functions in the pathway porphyrin-containing compound metabolism; protoporphyrin-IX biosynthesis; 5-aminolevulinate from L-glutamyl-tRNA(Glu): step 2/2. The chain is Glutamate-1-semialdehyde 2,1-aminomutase from Bordetella avium (strain 197N).